The following is a 691-amino-acid chain: MAREYPLDRYRNIGIMAHIDAGKTTTTERILFYTGAIHRMGEVHEGNTTTDWMVQERERGITITSAAISAFWARHDQRYRVNIIDTPGHVDFTIEVERSLRVLDGAITVFDAVNGVEPQSETVWRQADKYKVPRICFINKMDRVGADFEMSVGTIREKLGARAVRMQLPLGAEDKHRGVIDLLKMKALVFQDSEQGSHYEESDIPEEFKEAADAARAELLEAAAEQDDALTEKFLEGVELTEDEVRGAIRKGCLGLKLFPVFCGSAFRHKGVQPLLDAVVDYLPSPLEVPPIHGKTPNGEDAVRETRDDAPFSALAFKIMNDPAFQSQTLTFLRVYSGKLEAGTAVWNSVKGKRERISRLVQMRADKKDEITECYAGDICAVVGLKLAGTGDTLCDDKQPIILERMDFPEPVIDIAIEPKSTADQDKILQSLQRLAMEDPSFRVRTNEETGQTLIAGMGELHLEIIVDRLLREFKVDANIGKPQVAYRETVTTQVEMEGKYIRQTGGRGQYGHIWLRVAPNEPGKGFSFENKVTGGVVSKEFVDAVKAGCAEAMQNGPVAGYPMVDVKVEAFDGSMHDVDSSEIAFKIAGSLAFKDAVRMATPVLLEPIMNCEIVTPDDFMGDVIGDLNGRRGKVQGMTPRPGRVQAIQAQVPLAAMFGYSTDLRSRSQGRATYTMQFSHYAPAPKTALNR.

Residues 8–287 form the tr-type G domain; that stretch reads DRYRNIGIMA…AVVDYLPSPL (280 aa). Residues 17–24, 85–89, and 139–142 each bind GTP; these read AHIDAGKT, DTPGH, and NKMD.

This sequence belongs to the TRAFAC class translation factor GTPase superfamily. Classic translation factor GTPase family. EF-G/EF-2 subfamily.

The protein localises to the cytoplasm. Catalyzes the GTP-dependent ribosomal translocation step during translation elongation. During this step, the ribosome changes from the pre-translocational (PRE) to the post-translocational (POST) state as the newly formed A-site-bound peptidyl-tRNA and P-site-bound deacylated tRNA move to the P and E sites, respectively. Catalyzes the coordinated movement of the two tRNA molecules, the mRNA and conformational changes in the ribosome. The chain is Elongation factor G 2 from Myxococcus xanthus (strain DK1622).